We begin with the raw amino-acid sequence, 603 residues long: Aspartate--tRNA(Asp/Asn) ligase (603 aa).

The aspartate stretch occupies residues 205 to 208; that stretch reads QLFK. Residue arginine 227 coordinates L-aspartate. ATP contacts are provided by residues 227 to 229 and glutamine 236; that span reads RDE. Histidine 463 contributes to the L-aspartate binding site. Glutamate 497 lines the ATP pocket. Position 504 (arginine 504) interacts with L-aspartate. Residue 549 to 552 participates in ATP binding; that stretch reads GMDR.

The protein belongs to the class-II aminoacyl-tRNA synthetase family. Type 1 subfamily. Homodimer.

Its subcellular location is the cytoplasm. The catalysed reaction is tRNA(Asx) + L-aspartate + ATP = L-aspartyl-tRNA(Asx) + AMP + diphosphate. Its function is as follows. Aspartyl-tRNA synthetase with relaxed tRNA specificity since it is able to aspartylate not only its cognate tRNA(Asp) but also tRNA(Asn). Reaction proceeds in two steps: L-aspartate is first activated by ATP to form Asp-AMP and then transferred to the acceptor end of tRNA(Asp/Asn). This chain is Aspartate--tRNA(Asp/Asn) ligase, found in Anaeromyxobacter dehalogenans (strain 2CP-1 / ATCC BAA-258).